The primary structure comprises 158 residues: Ribonuclease H (158 aa).

One can recognise an RNase H type-1 domain in the interval 3–144; it reads GLKQLLIFTD…CDTLAREAAE (142 aa). Asp12, Glu50, Asp72, and Asp136 together coordinate Mg(2+).

The protein belongs to the RNase H family. Monomer. Mg(2+) is required as a cofactor.

The protein resides in the cytoplasm. The enzyme catalyses Endonucleolytic cleavage to 5'-phosphomonoester.. In terms of biological role, endonuclease that specifically degrades the RNA of RNA-DNA hybrids. In Shewanella loihica (strain ATCC BAA-1088 / PV-4), this protein is Ribonuclease H.